The chain runs to 96 residues: Putative pterin-4-alpha-carbinolamine dehydratase (96 aa).

Belongs to the pterin-4-alpha-carbinolamine dehydratase family.

It catalyses the reaction (4aS,6R)-4a-hydroxy-L-erythro-5,6,7,8-tetrahydrobiopterin = (6R)-L-erythro-6,7-dihydrobiopterin + H2O. The chain is Putative pterin-4-alpha-carbinolamine dehydratase from Paraburkholderia xenovorans (strain LB400).